Here is a 399-residue protein sequence, read N- to C-terminus: Forkhead box protein A4 (399 aa).

A DNA-binding region (fork-head) is located at residues 119–213; sequence KPPYSYISLI…ENGCYLRRQK (95 aa). Residues 219–234 show a composition bias toward basic and acidic residues; the sequence is RSKSGEREKKVNKPGD. The interval 219 to 290 is disordered; the sequence is RSKSGEREKK…VGLSPTSEQA (72 aa). The segment covering 267–277 has biased composition (polar residues); the sequence is STGSSIHQASG.

The protein localises to the nucleus. In terms of biological role, transcriptional repressor involved in embryonic nervous system development. Plays a role in the induction and patterning of the anterior-posterior neural axis. Involved in the establishment of floor plate differentiation from neural plate cells during gastrulation. Binds the anf1 promoter sequence to restrict expression of anf1 to the anterior of the neural plate, thereby patterning the forebrain. Can bind to the HNF-3-alpha DNA target sequence. Cooperates with t/bra in a dose-dependent manner to specify dorsal mesoderm formation, including notochord. May be involved in the dorso-ventral patterning of the mesoderm. Binds to DNA via the target sequence 5'-[GA]TAAA[TC]A-3', with 5'-GTAAATA-3' being the preferred binding site. In Xenopus tropicalis (Western clawed frog), this protein is Forkhead box protein A4.